The primary structure comprises 248 residues: Probable transcriptional regulatory protein Desal_2886 (248 aa).

A disordered region spans residues 1–21; it reads MAGHSKWANIQHRKGRQDAKR.

Belongs to the TACO1 family.

The protein resides in the cytoplasm. This Maridesulfovibrio salexigens (strain ATCC 14822 / DSM 2638 / NCIMB 8403 / VKM B-1763) (Desulfovibrio salexigens) protein is Probable transcriptional regulatory protein Desal_2886.